We begin with the raw amino-acid sequence, 347 residues long: Protein FAM50 homolog (347 aa).

The segment covering Glu77–Arg113 has biased composition (basic and acidic residues). The disordered stretch occupies residues Glu77–Lys142. Residues Pro123–Pro138 are compositionally biased toward acidic residues.

The protein belongs to the FAM50 family.

The protein is Protein FAM50 homolog of Aedes aegypti (Yellowfever mosquito).